Here is a 185-residue protein sequence, read N- to C-terminus: UPF0397 protein lhv_0999 (185 aa).

5 helical membrane passes run 11 to 31 (VVAM…TSIP), 45 to 65 (FLAL…GFIG), 72 to 92 (IMYG…GLII), 111 to 131 (ILLF…VVAP), and 145 to 165 (VFVQ…VVGT).

Belongs to the UPF0397 family.

It is found in the cell membrane. The polypeptide is UPF0397 protein lhv_0999 (Lactobacillus helveticus (strain DPC 4571)).